Here is a 222-residue protein sequence, read N- to C-terminus: Eukaryotic translation initiation factor 3 subunit K (222 aa).

The 163-residue stretch at 46–208 (YDLEANLAVL…KIKTKNITEK (163 aa)) folds into the PCI domain.

The protein belongs to the eIF-3 subunit K family. Component of the eukaryotic translation initiation factor 3 (eIF-3) complex. The eIF-3 complex interacts with pix.

Its subcellular location is the cytoplasm. Functionally, component of the eukaryotic translation initiation factor 3 (eIF-3) complex, which is involved in protein synthesis of a specialized repertoire of mRNAs and, together with other initiation factors, stimulates binding of mRNA and methionyl-tRNAi to the 40S ribosome. The eIF-3 complex specifically targets and initiates translation of a subset of mRNAs involved in cell proliferation. The polypeptide is Eukaryotic translation initiation factor 3 subunit K (Drosophila persimilis (Fruit fly)).